We begin with the raw amino-acid sequence, 189 residues long: Selenoprotein S (189 aa).

Residues 29-49 (VVLSSYGWYILLGCILIYLLI) form a helical membrane-spanning segment. Residues 114–125 (IETWDRMKEGKS) show a composition bias toward basic and acidic residues. The tract at residues 114 to 189 (IETWDRMKEG…RRGPSSGGUG (76 aa)) is disordered. Low complexity predominate over residues 136–147 (PSPSTSTSAATK). Positions 148–157 (PKQEKQERKT) are enriched in basic and acidic residues. Position 188 (Sec-188) is a non-standard amino acid, selenocysteine.

The protein belongs to the selenoprotein S family.

It is found in the endoplasmic reticulum membrane. The protein resides in the cytoplasm. Functionally, involved in the degradation process of misfolded endoplasmic reticulum (ER) luminal proteins. Participates in the transfer of misfolded proteins from the ER to the cytosol, where they are destroyed by the proteasome in a ubiquitin-dependent manner. This Xenopus tropicalis (Western clawed frog) protein is Selenoprotein S (vimp).